We begin with the raw amino-acid sequence, 190 residues long: dCTP deaminase (190 aa).

113 to 118 (KSTYAR) lines the dCTP pocket. Glu139 functions as the Proton donor/acceptor in the catalytic mechanism. DCTP is bound by residues Gln158, Tyr172, Lys181, and Gln182.

The protein belongs to the dCTP deaminase family. Homotrimer.

The catalysed reaction is dCTP + H2O + H(+) = dUTP + NH4(+). It participates in pyrimidine metabolism; dUMP biosynthesis; dUMP from dCTP (dUTP route): step 1/2. In terms of biological role, catalyzes the deamination of dCTP to dUTP. This chain is dCTP deaminase, found in Chlamydia caviae (strain ATCC VR-813 / DSM 19441 / 03DC25 / GPIC) (Chlamydophila caviae).